Consider the following 1026-residue polypeptide: Leucine-rich repeat and coiled-coil domain-containing protein 1 (1026 aa).

LRR repeat units follow at residues 39–60 (SIHA…DHIW), 61–82 (NLRH…NTLT), 83–104 (KLCT…EALV), 105–126 (NLTK…MPLH), and 131–152 (KLRY…LQCT). In terms of domain architecture, LRRCT spans 170 to 212 (NPICLIPGYRAIILQTLPQLRILDCKNIFGEPVSLEEINSSHL). A disordered region spans residues 310–338 (DNVPEKDLRPKRDTDITSESDYGNRRECS). The segment covering 312–324 (VPEKDLRPKRDTD) has biased composition (basic and acidic residues). The stretch at 428-641 (REMRWKAEQT…DLENEFRIAL (214 aa)) forms a coiled coil.

It belongs to the LRRCC1 family.

The protein resides in the cytoplasm. It localises to the cytoskeleton. It is found in the microtubule organizing center. Its subcellular location is the centrosome. The protein localises to the centriole. Required for the organization of the mitotic spindle. Maintains the structural integrity of centrosomes during mitosis. The protein is Leucine-rich repeat and coiled-coil domain-containing protein 1 (Lrrcc1) of Mus musculus (Mouse).